Consider the following 124-residue polypeptide: Acidic phospholipase A2 (124 aa).

7 cysteine pairs are disulfide-bonded: C26-C116, C28-C44, C43-C95, C49-C124, C50-C88, C57-C81, and C75-C86. Y27, G29, and G31 together coordinate Ca(2+). H47 is a catalytic residue. Ca(2+) is bound at residue D48. The active site involves D89.

This sequence belongs to the phospholipase A2 family. Group II subfamily. D49 sub-subfamily. Monomer. Ca(2+) serves as cofactor. In terms of tissue distribution, expressed by the venom gland.

Its subcellular location is the secreted. The enzyme catalyses a 1,2-diacyl-sn-glycero-3-phosphocholine + H2O = a 1-acyl-sn-glycero-3-phosphocholine + a fatty acid + H(+). Functionally, snake venom phospholipase A2 (PLA2) that acts in vivo as an anti-thrombotic agent. Inhibits platelet aggregation induced by ADP, arachidonic acid, and thrombin. PLA2 catalyzes the calcium-dependent hydrolysis of the 2-acyl groups in 3-sn-phosphoglycerides. In Gloydius halys (Chinese water mocassin), this protein is Acidic phospholipase A2.